Here is a 654-residue protein sequence, read N- to C-terminus: Coiled-coil domain-containing protein 81 (654 aa).

Positions 196-270 (SRESYRKRPN…RERQSISPAK (75 aa)) are disordered. Ser-206 is subject to Phosphoserine. Basic and acidic residues-rich tracts occupy residues 212–222 (RIEHKETENKT) and 232–251 (GENRPRKIKLKDQSDKEGGA). Ser-273, Ser-275, Ser-296, and Ser-419 each carry phosphoserine. Polar residues predominate over residues 293–302 (ENLSSPGCQR). Residues 293–318 (ENLSSPGCQRNDNERPRTSPAPACQD) form a disordered region. The stretch at 431-562 (SQSLLKQMES…QRRDLQMLQR (132 aa)) forms a coiled coil.

Its subcellular location is the cytoplasm. It is found in the cytoskeleton. The protein resides in the microtubule organizing center. The protein localises to the centrosome. The sequence is that of Coiled-coil domain-containing protein 81 (Ccdc81) from Mus musculus (Mouse).